A 137-amino-acid chain; its full sequence is Putative mucosal pentraxin homolog (137 aa).

One can recognise a Pentraxin (PTX) domain in the interval 1–137; sequence MGMYLLHIGN…YVVTKPKVWA (137 aa). Glutamate 73, aspartate 75, and glutamine 85 together coordinate Ca(2+).

This sequence belongs to the pentraxin family. In terms of tissue distribution, not expressed in the intestinal tract including ascending colon, descending colon and rectum. Not expressed in the human colon cancer cell lines HT-29 and CaCo-2.

The polypeptide is Putative mucosal pentraxin homolog (MPTX1) (Homo sapiens (Human)).